The sequence spans 533 residues: Adenine deaminase (533 aa).

It belongs to the metallo-dependent hydrolases superfamily. Adenine deaminase family. Mn(2+) is required as a cofactor.

The enzyme catalyses adenine + H2O + H(+) = hypoxanthine + NH4(+). This Sulfurovum sp. (strain NBC37-1) protein is Adenine deaminase.